The following is a 120-amino-acid chain: UPF0231 protein YacL (120 aa).

Belongs to the UPF0231 family.

The polypeptide is UPF0231 protein YacL (Escherichia coli (strain SMS-3-5 / SECEC)).